The following is a 1070-amino-acid chain: DNA-directed RNA polymerase subunit beta (1070 aa).

This sequence belongs to the RNA polymerase beta chain family. In terms of assembly, in plastids the minimal PEP RNA polymerase catalytic core is composed of four subunits: alpha, beta, beta', and beta''. When a (nuclear-encoded) sigma factor is associated with the core the holoenzyme is formed, which can initiate transcription.

Its subcellular location is the plastid. The protein resides in the chloroplast. The catalysed reaction is RNA(n) + a ribonucleoside 5'-triphosphate = RNA(n+1) + diphosphate. Its function is as follows. DNA-dependent RNA polymerase catalyzes the transcription of DNA into RNA using the four ribonucleoside triphosphates as substrates. This is DNA-directed RNA polymerase subunit beta from Solanum tuberosum (Potato).